Reading from the N-terminus, the 342-residue chain is GTPase Obg (342 aa).

The Obg domain maps to 1–159 (MKFLDEAKVY…HWLWLRLKLI (159 aa)). In terms of domain architecture, OBG-type G spans 160–327 (ADAGLVGLPN…ALRALMAAMD (168 aa)). Residues 166 to 173 (GLPNAGKS), 191 to 195 (FTTLH), 212 to 215 (DIPG), 279 to 282 (SKAD), and 308 to 310 (SAA) contribute to the GTP site. Positions 173 and 193 each coordinate Mg(2+).

Belongs to the TRAFAC class OBG-HflX-like GTPase superfamily. OBG GTPase family. As to quaternary structure, monomer. Requires Mg(2+) as cofactor.

Its subcellular location is the cytoplasm. Functionally, an essential GTPase which binds GTP, GDP and possibly (p)ppGpp with moderate affinity, with high nucleotide exchange rates and a fairly low GTP hydrolysis rate. Plays a role in control of the cell cycle, stress response, ribosome biogenesis and in those bacteria that undergo differentiation, in morphogenesis control. In Methylobacterium nodulans (strain LMG 21967 / CNCM I-2342 / ORS 2060), this protein is GTPase Obg.